Reading from the N-terminus, the 394-residue chain is Elongation factor Tu (394 aa).

The 195-residue stretch at 10-204 (KPHVNVGTIG…ALDSYIPEPE (195 aa)) folds into the tr-type G domain. The segment at 19–26 (GHVDHGKT) is G1. Position 19–26 (19–26 (GHVDHGKT)) interacts with GTP. Threonine 26 contacts Mg(2+). The G2 stretch occupies residues 60 to 64 (GITIS). The tract at residues 81 to 84 (DCPG) is G3. GTP is bound by residues 81-85 (DCPGH) and 136-139 (NKCD). Residues 136-139 (NKCD) form a G4 region. The segment at 174–176 (SAL) is G5.

It belongs to the TRAFAC class translation factor GTPase superfamily. Classic translation factor GTPase family. EF-Tu/EF-1A subfamily. Monomer.

Its subcellular location is the cytoplasm. It carries out the reaction GTP + H2O = GDP + phosphate + H(+). GTP hydrolase that promotes the GTP-dependent binding of aminoacyl-tRNA to the A-site of ribosomes during protein biosynthesis. This is Elongation factor Tu from Pseudoalteromonas atlantica (strain T6c / ATCC BAA-1087).